A 522-amino-acid chain; its full sequence is Maturase K (522 aa).

It belongs to the intron maturase 2 family. MatK subfamily.

Its subcellular location is the plastid. It is found in the chloroplast. Its function is as follows. Usually encoded in the trnK tRNA gene intron. Probably assists in splicing its own and other chloroplast group II introns. This Dianella ensifolia (Flax lily) protein is Maturase K.